An 89-amino-acid chain; its full sequence is HssA/B-like protein 15 (89 aa).

The protein belongs to the hssA/B family.

The chain is HssA/B-like protein 15 (hssl15) from Dictyostelium discoideum (Social amoeba).